Here is a 306-residue protein sequence, read N- to C-terminus: SPbeta prophage-derived uncharacterized protein YonG (306 aa).

The protein is SPbeta prophage-derived uncharacterized protein YonG (yonG) of Bacillus subtilis (strain 168).